Consider the following 469-residue polypeptide: Glutamate--tRNA ligase 2 (469 aa).

Positions proline 10–serine 20 match the 'HIGH' region motif. Positions lysine 239–arginine 243 match the 'KMSKS' region motif. ATP is bound at residue lysine 242.

This sequence belongs to the class-I aminoacyl-tRNA synthetase family. Glutamate--tRNA ligase type 1 subfamily. Monomer.

The protein localises to the cytoplasm. It catalyses the reaction tRNA(Glu) + L-glutamate + ATP = L-glutamyl-tRNA(Glu) + AMP + diphosphate. Functionally, catalyzes the attachment of glutamate to tRNA(Glu) in a two-step reaction: glutamate is first activated by ATP to form Glu-AMP and then transferred to the acceptor end of tRNA(Glu). In Rickettsia typhi (strain ATCC VR-144 / Wilmington), this protein is Glutamate--tRNA ligase 2.